The primary structure comprises 235 residues: Ribonuclease 3 (235 aa).

The 125-residue stretch at leucine 7–glycine 131 folds into the RNase III domain. Glutamate 45 serves as a coordination point for Mg(2+). Aspartate 49 is an active-site residue. Positions 117 and 120 each coordinate Mg(2+). Glutamate 120 is an active-site residue. The 70-residue stretch at aspartate 156–isoleucine 225 folds into the DRBM domain.

The protein belongs to the ribonuclease III family. In terms of assembly, homodimer. It depends on Mg(2+) as a cofactor.

It localises to the cytoplasm. It carries out the reaction Endonucleolytic cleavage to 5'-phosphomonoester.. Digests double-stranded RNA. Involved in the processing of primary rRNA transcript to yield the immediate precursors to the large and small rRNAs (23S and 16S). Processes some mRNAs, and tRNAs when they are encoded in the rRNA operon. Processes pre-crRNA and tracrRNA of type II CRISPR loci if present in the organism. The polypeptide is Ribonuclease 3 (Methylocella silvestris (strain DSM 15510 / CIP 108128 / LMG 27833 / NCIMB 13906 / BL2)).